Reading from the N-terminus, the 124-residue chain is Small ribosomal subunit protein uS12 (124 aa).

The tract at residues 1 to 32 (MPTIQQLVRKGREDKVVKTKTPALKGSPQRRG) is disordered. A 3-methylthioaspartic acid modification is found at Asp-89. Residues 105–124 (QGVKNRKQARSRYGAKKEKS) are disordered. Residues 108 to 118 (KNRKQARSRYG) show a composition bias toward basic residues.

It belongs to the universal ribosomal protein uS12 family. In terms of assembly, part of the 30S ribosomal subunit. Contacts proteins S8 and S17. May interact with IF1 in the 30S initiation complex.

Functionally, with S4 and S5 plays an important role in translational accuracy. Interacts with and stabilizes bases of the 16S rRNA that are involved in tRNA selection in the A site and with the mRNA backbone. Located at the interface of the 30S and 50S subunits, it traverses the body of the 30S subunit contacting proteins on the other side and probably holding the rRNA structure together. The combined cluster of proteins S8, S12 and S17 appears to hold together the shoulder and platform of the 30S subunit. The chain is Small ribosomal subunit protein uS12 from Kineococcus radiotolerans (strain ATCC BAA-149 / DSM 14245 / SRS30216).